Here is a 299-residue protein sequence, read N- to C-terminus: MTKIKIVVIVGPTAVGKTALGISLAKAFNGEIISGDSQQVYRQLDIGTAKATQEEQEAAVHHLIDIREVTESYSAYDFVQDAQKAISDIVSRGKLPIIVGGTGLYLQSLLEGYHLGGQVNQEAVKAYRNELEQLDDHDLYERLQVNNITIEQVNRRRAIRALELAQFADELENAETAYEPLIIGLNDDRQVIYDRINQRVDRMLENGLLEEAKWLYEHYPTVQASRGIGYKELFPYFVGEMTLAEASDQLKQNTRRFAKRQLTWFRNRMAVSFTAITAPDYPQVVHDRVRDFLGQKEKS.

11–18 contacts ATP; it reads GPTAVGKT. 13–18 is a binding site for substrate; sequence TAVGKT. The segment at 36 to 39 is interaction with substrate tRNA; it reads DSQQ.

Belongs to the IPP transferase family. Monomer. It depends on Mg(2+) as a cofactor.

It catalyses the reaction adenosine(37) in tRNA + dimethylallyl diphosphate = N(6)-dimethylallyladenosine(37) in tRNA + diphosphate. Catalyzes the transfer of a dimethylallyl group onto the adenine at position 37 in tRNAs that read codons beginning with uridine, leading to the formation of N6-(dimethylallyl)adenosine (i(6)A). This is tRNA dimethylallyltransferase from Streptococcus pyogenes serotype M49 (strain NZ131).